The primary structure comprises 220 residues: Dual specificity protein phosphatase 19 (220 aa).

Methionine 1 is modified (N-acetylmethionine). The Tyrosine-protein phosphatase domain maps to 64-205; that stretch reads QVGVIKPWLL…LRTYQVGKES (142 aa). Cysteine 149 functions as the Phosphocysteine intermediate in the catalytic mechanism.

It belongs to the protein-tyrosine phosphatase family. Non-receptor class dual specificity subfamily.

It catalyses the reaction O-phospho-L-tyrosyl-[protein] + H2O = L-tyrosyl-[protein] + phosphate. The catalysed reaction is O-phospho-L-seryl-[protein] + H2O = L-seryl-[protein] + phosphate. It carries out the reaction O-phospho-L-threonyl-[protein] + H2O = L-threonyl-[protein] + phosphate. With respect to regulation, phosphatase activity is enhanced by Ca(2+) and Mn(2+). In terms of biological role, has a dual specificity toward Ser/Thr and Tyr-containing proteins. The protein is Dual specificity protein phosphatase 19 of Mus musculus (Mouse).